The sequence spans 61 residues: Small ribosomal subunit protein uS14 (61 aa).

4 residues coordinate Zn(2+): Cys-24, Cys-27, Cys-40, and Cys-43.

It belongs to the universal ribosomal protein uS14 family. Zinc-binding uS14 subfamily. In terms of assembly, part of the 30S ribosomal subunit. Contacts proteins S3 and S10. Zn(2+) is required as a cofactor.

In terms of biological role, binds 16S rRNA, required for the assembly of 30S particles and may also be responsible for determining the conformation of the 16S rRNA at the A site. The protein is Small ribosomal subunit protein uS14 of Thermotoga neapolitana (strain ATCC 49049 / DSM 4359 / NBRC 107923 / NS-E).